Consider the following 437-residue polypeptide: UDP-N-acetylmuramate--L-alanine ligase (437 aa).

108–114 (GAHGKTS) is a binding site for ATP.

Belongs to the MurCDEF family.

The protein localises to the cytoplasm. The enzyme catalyses UDP-N-acetyl-alpha-D-muramate + L-alanine + ATP = UDP-N-acetyl-alpha-D-muramoyl-L-alanine + ADP + phosphate + H(+). Its pathway is cell wall biogenesis; peptidoglycan biosynthesis. Its function is as follows. Cell wall formation. The chain is UDP-N-acetylmuramate--L-alanine ligase from Staphylococcus saprophyticus subsp. saprophyticus (strain ATCC 15305 / DSM 20229 / NCIMB 8711 / NCTC 7292 / S-41).